A 176-amino-acid polypeptide reads, in one-letter code: NAD(P)H-quinone oxidoreductase subunit J (176 aa).

Over residues 1 to 10 the composition is skewed to polar residues; that stretch reads MSETPTSPNQ. Residues 1–22 form a disordered region; sequence MSETPTSPNQDLPEAPQAGPLS.

The protein belongs to the complex I 30 kDa subunit family. NDH-1 can be composed of about 15 different subunits; different subcomplexes with different compositions have been identified which probably have different functions.

Its subcellular location is the cellular thylakoid membrane. It carries out the reaction a plastoquinone + NADH + (n+1) H(+)(in) = a plastoquinol + NAD(+) + n H(+)(out). The enzyme catalyses a plastoquinone + NADPH + (n+1) H(+)(in) = a plastoquinol + NADP(+) + n H(+)(out). Its function is as follows. NDH-1 shuttles electrons from an unknown electron donor, via FMN and iron-sulfur (Fe-S) centers, to quinones in the respiratory and/or the photosynthetic chain. The immediate electron acceptor for the enzyme in this species is believed to be plastoquinone. Couples the redox reaction to proton translocation, and thus conserves the redox energy in a proton gradient. Cyanobacterial NDH-1 also plays a role in inorganic carbon-concentration. The protein is NAD(P)H-quinone oxidoreductase subunit J of Synechococcus sp. (strain RCC307).